The chain runs to 283 residues: Tetraspanin-33 (283 aa).

Topologically, residues 1 to 24 (MARRPGAPAAYGEDFSFVSPLVKY) are cytoplasmic. A helical membrane pass occupies residues 25 to 45 (LLFFFNMLFWVISMVMVAVGV). The Extracellular portion of the chain corresponds to 46–64 (YARLMKHEEAALACLAVDP). Residues 65 to 85 (AILLIVVGILMFLLTFCGCIG) form a helical membrane-spanning segment. Residues 86–96 (SLRENICLLQT) lie on the Cytoplasmic side of the membrane. A helical transmembrane segment spans residues 97 to 117 (FSLCLTVVFLLQLAAGVLGFV). Residues 118–235 (FSDKVRGKVS…DRLVNWIHSN (118 aa)) are Extracellular-facing. Cystine bridges form between cysteine 156–cysteine 224, cysteine 157–cysteine 189, cysteine 173–cysteine 183, and cysteine 190–cysteine 203. Asparagine 172 is a glycosylation site (N-linked (GlcNAc...) asparagine). The chain crosses the membrane as a helical span at residues 236–256 (LFVLGGVALGLAIPQLVGIML). Topologically, residues 257-283 (SMILVSQIKDQIKLQLYNQQHRADPWY) are cytoplasmic.

This sequence belongs to the tetraspanin (TM4SF) family. Homodimer; disulfide-linked. Interacts (via extracellular domain) with ADAM10 (via extracellular domain). Interacts (via cytoplasmic domain) with PLEKHA7 (via WW domains); the interaction is dependent on PDZD11 being bound to PLEKHA7 and facilitates the docking of ADAM10 to zonula adherens.

The protein resides in the cell membrane. It is found in the cell junction. It localises to the adherens junction. The protein localises to the cytoplasm. Functionally, part of TspanC8 subgroup, composed of 6 members that interact with the transmembrane metalloprotease ADAM10. This interaction is required for ADAM10 exit from the endoplasmic reticulum and for enzymatic maturation and trafficking to the cell surface as well as substrate specificity. Different TspanC8/ADAM10 complexes have distinct substrates. Plays an important role in normal erythropoiesis. It has a role in the differentiation of erythroid progenitors. Negatively regulates ligand-induced Notch activity probably by regulating ADAM10 activity. Mediates docking of ADAM10 to zonula adherens by interacting with ADAM10 and, in a PDZD11-dependent manner, with the zonula adherens protein PLEKHA7. The sequence is that of Tetraspanin-33 (TSPAN33) from Bos taurus (Bovine).